The sequence spans 273 residues: Dermonecrotic toxin SdSicTox-betaIIB1bxiv (273 aa).

Residue His4 is part of the active site. Positions 24 and 26 each coordinate Mg(2+). His40 serves as the catalytic Nucleophile. Cystine bridges form between Cys44–Cys50 and Cys46–Cys189. Asp84 lines the Mg(2+) pocket.

Belongs to the arthropod phospholipase D family. Class II subfamily. It depends on Mg(2+) as a cofactor. As to expression, expressed by the venom gland.

It localises to the secreted. The enzyme catalyses an N-(acyl)-sphingosylphosphocholine = an N-(acyl)-sphingosyl-1,3-cyclic phosphate + choline. It carries out the reaction an N-(acyl)-sphingosylphosphoethanolamine = an N-(acyl)-sphingosyl-1,3-cyclic phosphate + ethanolamine. The catalysed reaction is a 1-acyl-sn-glycero-3-phosphocholine = a 1-acyl-sn-glycero-2,3-cyclic phosphate + choline. It catalyses the reaction a 1-acyl-sn-glycero-3-phosphoethanolamine = a 1-acyl-sn-glycero-2,3-cyclic phosphate + ethanolamine. Dermonecrotic toxins cleave the phosphodiester linkage between the phosphate and headgroup of certain phospholipids (sphingolipid and lysolipid substrates), forming an alcohol (often choline) and a cyclic phosphate. This toxin acts on sphingomyelin (SM). It may also act on ceramide phosphoethanolamine (CPE), lysophosphatidylcholine (LPC) and lysophosphatidylethanolamine (LPE), but not on lysophosphatidylserine (LPS), and lysophosphatidylglycerol (LPG). It acts by transphosphatidylation, releasing exclusively cyclic phosphate products as second products. Induces dermonecrosis, hemolysis, increased vascular permeability, edema, inflammatory response, and platelet aggregation. This chain is Dermonecrotic toxin SdSicTox-betaIIB1bxiv, found in Sicarius cf. damarensis (strain GJB-2008) (Six-eyed sand spider).